We begin with the raw amino-acid sequence, 912 residues long: Serine/threonine-protein kinase D1 (912 aa).

A Phosphotyrosine modification is found at Tyr95. Residues 146–196 form a Phorbol-ester/DAG-type 1 zinc finger; the sequence is PHALFVHSYRAPAFCDHCGEMLWGLVRQGLKCEGCGLNYHKRCAFKIPNNC. Phosphoserine occurs at positions 205, 208, 219, and 223. Residues 270–320 form a Phorbol-ester/DAG-type 2 zinc finger; the sequence is PHTFVIHSYTRPTVCQYCKKLLKGLFRQGLQCKDCRFNCHKRCAPKVPNNC. Position 345 is a phosphoserine (Ser345). The tract at residues 377 to 402 is disordered; that stretch reads NDSGEMQDPDPDHEDANRTISPSTSN. Ser397 and Ser401 each carry phosphoserine; by MAPK13. Residues 422-541 form the PH domain; it reads TVMKEGWMVH…WEIAIQHALM (120 aa). A Phosphotyrosine modification is found at Tyr432. Ser448 carries the phosphoserine modification. Position 463 is a phosphotyrosine; by ABL (Tyr463). Ser473 carries the post-translational modification Phosphoserine. At Tyr502 the chain carries Phosphotyrosine. The residue at position 548 (Ser548) is a Phosphoserine. A Protein kinase domain is found at 583-839; sequence IFPDEVLGSG…VDKTLSHPWL (257 aa). Residues 589 to 597 and Lys612 contribute to the ATP site; that span reads LGSGQFGIV. Asp706 acts as the Proton acceptor in catalysis. Position 738 is a phosphoserine; by PKC/PRKCD (Ser738). A Phosphoserine; by autocatalysis and PKC/PRKCD modification is found at Ser742. The residue at position 749 (Tyr749) is a Phosphotyrosine. Residue Ser910 is modified to Phosphoserine; by autocatalysis.

It belongs to the protein kinase superfamily. CAMK Ser/Thr protein kinase family. PKD subfamily. In terms of assembly, interacts (via N-terminus) with ADAP1/CENTA1. Interacts with MAPK13. Interacts with DAPK1 in an oxidative stress-regulated manner. Interacts with USP28; the interaction induces phosphorylation of USP28 and activated KRAS-mediated stabilization of ZNF304. Interacts with AKAP13 (via C-terminal domain). Mg(2+) serves as cofactor. Phosphorylated at Ser-397 and Ser-401 by MAPK13 during regulation of insulin secretion in pancreatic beta cells. Phosphorylated by DAPK1. Phosphorylated at Tyr-95 and by ABL at Tyr-463, which primes the kinase in response to oxidative stress, and promotes a second step activating phosphorylation at Ser-738/Ser-742 by PKRD. Phosphorylated on Ser-910 upon S.enterica infection in macrophages.

It localises to the cytoplasm. Its subcellular location is the cell membrane. The protein localises to the golgi apparatus. It is found in the trans-Golgi network. The catalysed reaction is L-seryl-[protein] + ATP = O-phospho-L-seryl-[protein] + ADP + H(+). It catalyses the reaction L-threonyl-[protein] + ATP = O-phospho-L-threonyl-[protein] + ADP + H(+). With respect to regulation, activated by DAG and phorbol esters. Phorbol-ester/DAG-type domain 1 binds DAG with high affinity and appears to play the dominant role in mediating translocation to the cell membrane and trans-Golgi network. Phorbol-ester/DAG-type domain 2 binds phorbol ester with higher affinity. Autophosphorylation of Ser-742 and phosphorylation of Ser-738 by PKC relieves auto-inhibition by the PH domain. Phosphorylation on Tyr-463 by the SRC-ABL1 pathway in response to oxidative stress, is also required for activation. Activated by DAPK1 under oxidative stress. In terms of biological role, serine/threonine-protein kinase that converts transient diacylglycerol (DAG) signals into prolonged physiological effects downstream of PKC, and is involved in the regulation of MAPK8/JNK1 and Ras signaling, Golgi membrane integrity and trafficking, cell survival through NF-kappa-B activation, cell migration, cell differentiation by mediating HDAC7 nuclear export, cell proliferation via MAPK1/3 (ERK1/2) signaling, and plays a role in cardiac hypertrophy, VEGFA-induced angiogenesis, genotoxic-induced apoptosis and flagellin-stimulated inflammatory response. Phosphorylates the epidermal growth factor receptor (EGFR) on dual threonine residues, which leads to the suppression of epidermal growth factor (EGF)-induced MAPK8/JNK1 activation and subsequent JUN phosphorylation. Phosphorylates RIN1, inducing RIN1 binding to 14-3-3 proteins YWHAB, YWHAE and YWHAZ and increased competition with RAF1 for binding to GTP-bound form of Ras proteins (NRAS, HRAS and KRAS). Acts downstream of the heterotrimeric G-protein beta/gamma-subunit complex to maintain the structural integrity of the Golgi membranes, and is required for protein transport along the secretory pathway. In the trans-Golgi network (TGN), regulates the fission of transport vesicles that are on their way to the plasma membrane. May act by activating the lipid kinase phosphatidylinositol 4-kinase beta (PI4KB) at the TGN for the local synthesis of phosphorylated inositol lipids, which induces a sequential production of DAG, phosphatidic acid (PA) and lyso-PA (LPA) that are necessary for membrane fission and generation of specific transport carriers to the cell surface. Under oxidative stress, is phosphorylated at Tyr-463 via SRC-ABL1 and contributes to cell survival by activating IKK complex and subsequent nuclear translocation and activation of NFKB1. Involved in cell migration by regulating integrin alpha-5/beta-3 recycling and promoting its recruitment in newly forming focal adhesion. In osteoblast differentiation, mediates the bone morphogenetic protein 2 (BMP2)-induced nuclear export of HDAC7, which results in the inhibition of HDAC7 transcriptional repression of RUNX2. In neurons, plays an important role in neuronal polarity by regulating the biogenesis of TGN-derived dendritic vesicles, and is involved in the maintenance of dendritic arborization and Golgi structure in hippocampal cells. May potentiate mitogenesis induced by the neuropeptide bombesin or vasopressin by mediating an increase in the duration of MAPK1/3 (ERK1/2) signaling, which leads to accumulation of immediate-early gene products including FOS that stimulate cell cycle progression. Plays an important role in the proliferative response induced by low calcium in keratinocytes, through sustained activation of MAPK1/3 (ERK1/2) pathway. Downstream of novel PKC signaling, plays a role in cardiac hypertrophy by phosphorylating HDAC5, which in turn triggers XPO1/CRM1-dependent nuclear export of HDAC5, MEF2A transcriptional activation and induction of downstream target genes that promote myocyte hypertrophy and pathological cardiac remodeling. Mediates cardiac troponin I (TNNI3) phosphorylation at the PKA sites, which results in reduced myofilament calcium sensitivity, and accelerated crossbridge cycling kinetics. The PRKD1-HDAC5 pathway is also involved in angiogenesis by mediating VEGFA-induced specific subset of gene expression, cell migration, and tube formation. In response to VEGFA, is necessary and required for HDAC7 phosphorylation which induces HDAC7 nuclear export and endothelial cell proliferation and migration. During apoptosis induced by cytarabine and other genotoxic agents, PRKD1 is cleaved by caspase-3 at Asp-378, resulting in activation of its kinase function and increased sensitivity of cells to the cytotoxic effects of genotoxic agents. In epithelial cells, is required for transducing flagellin-stimulated inflammatory responses by binding and phosphorylating TLR5, which contributes to MAPK14/p38 activation and production of inflammatory cytokines. Acts as an activator of NLRP3 inflammasome assembly by mediating phosphorylation of NLRP3. May play a role in inflammatory response by mediating activation of NF-kappa-B. May be involved in pain transmission by directly modulating TRPV1 receptor. Plays a role in activated KRAS-mediated stabilization of ZNF304 in colorectal cancer (CRC) cells. Regulates nuclear translocation of transcription factor TFEB in macrophages upon live S.enterica infection. The polypeptide is Serine/threonine-protein kinase D1 (PRKD1) (Homo sapiens (Human)).